The primary structure comprises 147 residues: uncharacterized protein (147 aa).

This is an uncharacterized protein from Caenorhabditis elegans.